We begin with the raw amino-acid sequence, 127 residues long: Holo-[acyl-carrier-protein] synthase (127 aa).

Residues aspartate 9 and glutamate 58 each contribute to the Mg(2+) site.

Belongs to the P-Pant transferase superfamily. AcpS family. Mg(2+) is required as a cofactor.

Its subcellular location is the cytoplasm. The enzyme catalyses apo-[ACP] + CoA = holo-[ACP] + adenosine 3',5'-bisphosphate + H(+). Functionally, transfers the 4'-phosphopantetheine moiety from coenzyme A to a Ser of acyl-carrier-protein. In Shewanella baltica (strain OS155 / ATCC BAA-1091), this protein is Holo-[acyl-carrier-protein] synthase.